The chain runs to 270 residues: Phosphate import ATP-binding protein PstB 2 (270 aa).

The 241-residue stretch at 25-265 folds into the ABC transporter domain; it reads LQAKDINIYY…PEKKQTEDYI (241 aa). ATP is bound at residue 57–64; that stretch reads GPSGCGKS.

Belongs to the ABC transporter superfamily. Phosphate importer (TC 3.A.1.7) family. As to quaternary structure, the complex is composed of two ATP-binding proteins (PstB), two transmembrane proteins (PstC and PstA) and a solute-binding protein (PstS).

It localises to the cell membrane. The catalysed reaction is phosphate(out) + ATP + H2O = ADP + 2 phosphate(in) + H(+). Part of the ABC transporter complex PstSACB involved in phosphate import. Responsible for energy coupling to the transport system. This is Phosphate import ATP-binding protein PstB 2 from Shouchella clausii (strain KSM-K16) (Alkalihalobacillus clausii).